We begin with the raw amino-acid sequence, 37 residues long: Large ribosomal subunit protein bL36 (37 aa).

The protein belongs to the bacterial ribosomal protein bL36 family.

The sequence is that of Large ribosomal subunit protein bL36 from Mycobacterium leprae (strain Br4923).